The chain runs to 579 residues: Vitamin B6 transporter TPN1 (579 aa).

The next 12 membrane-spanning stretches (helical) occupy residues 99-119, 123-143, 158-178, 199-219, 222-242, 275-295, 303-323, 363-383, 395-415, 422-442, 520-540, and 546-566; these read TGGL…GLSF, LASS…CSIM, LFGW…VMGW, PLWV…IFGI, VIKV…LLYI, LCYS…ILFP, IFCL…ILGL, VVVL…SAAF, IPRW…ALIG, ILGN…ILLF, FAFI…YWIG, and FGEY…GVVY.

Belongs to the purine-cytosine permease (2.A.39) family.

The protein resides in the membrane. Functionally, thiamine-regulated, high affinity import carrier of pyridoxine, pyridoxal and pyridoxamine. In Saccharomyces cerevisiae (Baker's yeast), this protein is Vitamin B6 transporter TPN1 (TPN1).